The sequence spans 493 residues: Alpha-amylase-related protein (493 aa).

Positions 1-19 (MFKLALTLTLCLAGSLSLA) are cleaved as a signal peptide. Gln20 carries the pyrrolidone carboxylic acid modification. Cys47 and Cys103 are disulfide-bonded. Asn117, Gln168, and Asp177 together coordinate Ca(2+). A disulfide bridge connects residues Cys156 and Cys170. Arg205 contacts chloride. The active-site Nucleophile is the Asp207. His211 is a Ca(2+) binding site. Glu244 functions as the Proton donor in the catalytic mechanism. Chloride is bound by residues Asn307 and Arg342. Intrachain disulfides connect Cys375–Cys381, Cys417–Cys440, and Cys447–Cys459.

Belongs to the glycosyl hydrolase 13 family. Monomer. The cofactor is Ca(2+). Requires chloride as cofactor.

Its subcellular location is the secreted. The enzyme catalyses Endohydrolysis of (1-&gt;4)-alpha-D-glucosidic linkages in polysaccharides containing three or more (1-&gt;4)-alpha-linked D-glucose units.. This Drosophila teissieri (Fruit fly) protein is Alpha-amylase-related protein (Amyrel).